The following is a 453-amino-acid chain: Homogentisate 1,2-dioxygenase (453 aa).

Positions 1-12 are enriched in basic and acidic residues; sequence MLEKAERQRKAA. Residues 1-43 form a disordered region; that stretch reads MLEKAERQRKAAPDQQRSAGYMPGFGNDFETESLPGSLPQGQN. The active-site Proton acceptor is His-306. 2 residues coordinate Fe cation: His-349 and Glu-355. Homogentisate is bound by residues Tyr-364 and His-385. A Fe cation-binding site is contributed by His-385.

The protein belongs to the homogentisate dioxygenase family. As to quaternary structure, hexamer; dimer of trimers. Fe cation is required as a cofactor.

The enzyme catalyses homogentisate + O2 = 4-maleylacetoacetate + H(+). It functions in the pathway amino-acid degradation; L-phenylalanine degradation; acetoacetate and fumarate from L-phenylalanine: step 4/6. Its function is as follows. Involved in the catabolism of homogentisate (2,5-dihydroxyphenylacetate or 2,5-OH-PhAc), a central intermediate in the degradation of phenylalanine and tyrosine. Catalyzes the oxidative ring cleavage of the aromatic ring of homogentisate to yield maleylacetoacetate. The polypeptide is Homogentisate 1,2-dioxygenase (Sinorhizobium medicae (strain WSM419) (Ensifer medicae)).